The following is a 560-amino-acid chain: MSFNRRSKNITEGVARAPNRSMYYALGYQQDDFSKPMIGVANGHSTITPCNSGLQKLADAAVIGIKEAGGNPQIFGTPTISDGMAMGTEGMKYSLVSREVIADCVETCVGGQWMDGVIVIGGCDKNMPGGMMGMLRANVPALYVYGGTILPGKYKGQDLNIVSVFEAVGQFSAGKMAEEDFCEIERRAIPGSGSCGGMYTANTMSSSFEALGMSLPYSSTMANVEEEIVASVKVAAGVLVEAVKADLKPRDIVTKKAIENAVAVIMATGGSTNAVLHFLAIAHAAEVEWTIDDFERVRRRTPVLCDLKPSGKYLAIDLHHAGGIPAVMKELLKHGLLHGDCMTITGKTVAENLADVPDLRADQDVIRAVTNPIYAEGHLAILKGNLSPEGCVAKITGLKSPVMTGPARVFEDEQSALAAIMANKIVAGDVMVLRYLGPKGGPGMPEMLAPTGALIGQGLGESVGLITDGRFSGGTWGMVVGHVAPEAYAGGNIALVQEGDSITIDAHQLLLQLNVSDDELARRRAAWTAPAPRYTRGVLAKFAFNASSASAGAVLDKFGG.

A [2Fe-2S] cluster-binding site is contributed by Cys-50. Residue Asp-82 participates in Mg(2+) binding. Cys-123 serves as a coordination point for [2Fe-2S] cluster. Mg(2+) contacts are provided by Asp-124 and Lys-125. Position 125 is an N6-carboxylysine (Lys-125). A [2Fe-2S] cluster-binding site is contributed by Cys-195. Glu-446 lines the Mg(2+) pocket. Residue Ser-472 is the Proton acceptor of the active site.

This sequence belongs to the IlvD/Edd family. In terms of assembly, homodimer. The cofactor is [2Fe-2S] cluster. It depends on Mg(2+) as a cofactor.

The enzyme catalyses (2R)-2,3-dihydroxy-3-methylbutanoate = 3-methyl-2-oxobutanoate + H2O. The catalysed reaction is (2R,3R)-2,3-dihydroxy-3-methylpentanoate = (S)-3-methyl-2-oxopentanoate + H2O. It participates in amino-acid biosynthesis; L-isoleucine biosynthesis; L-isoleucine from 2-oxobutanoate: step 3/4. The protein operates within amino-acid biosynthesis; L-valine biosynthesis; L-valine from pyruvate: step 3/4. Its function is as follows. Functions in the biosynthesis of branched-chain amino acids. Catalyzes the dehydration of (2R,3R)-2,3-dihydroxy-3-methylpentanoate (2,3-dihydroxy-3-methylvalerate) into 2-oxo-3-methylpentanoate (2-oxo-3-methylvalerate) and of (2R)-2,3-dihydroxy-3-methylbutanoate (2,3-dihydroxyisovalerate) into 2-oxo-3-methylbutanoate (2-oxoisovalerate), the penultimate precursor to L-isoleucine and L-valine, respectively. This chain is Dihydroxy-acid dehydratase, found in Leptothrix cholodnii (strain ATCC 51168 / LMG 8142 / SP-6) (Leptothrix discophora (strain SP-6)).